The sequence spans 754 residues: Nibrin (754 aa).

Positions 24–83 (YVVGRKNCAILIENDQSISRNHAVLTANFSVTNLSQTDEIPVLTLKDNSKYGTFVNEEKM) constitute an FHA domain. 2 consecutive BRCT domains span residues 105–181 (KFRI…TEFL) and 224–315 (GKTF…LAVI). Residues 111 to 328 (EPLVACSSCL…TKNYCDPQGH (218 aa)) are mediates interaction with SP100. Residues 221-402 (IFKGKTFIFL…FRMLSQDAPT (182 aa)) are interaction with MTOR, MAPKAP1 and RICTOR. A Phosphoserine; by ATM modification is found at Ser-278. Residues 326 to 346 (QGHPSTGLKTTTPGPSLSQGV) are disordered. The segment covering 328–346 (HPSTGLKTTTPGPSLSQGV) has biased composition (polar residues). Position 337 is a phosphothreonine (Thr-337). At Ser-343 the chain carries Phosphoserine; by ATM. Phosphoserine is present on Ser-347. Position 388 is an N6-lactoyllysine (Lys-388). Disordered regions lie at residues 396–415 (LSQDAPTVKESCKTSSNNNS) and 430–478 (QLSP…MSSC). Ser-397 bears the Phosphoserine mark. Position 402 is a phosphothreonine (Thr-402). 2 stretches are compositionally biased toward polar residues: residues 430–440 (QLSPTKLPSIN) and 447–462 (SQQQQTNSIRNYFQPS). Ser-432 carries the phosphoserine; by CDK2 modification. A Glycyl lysine isopeptide (Lys-Gly) (interchain with G-Cter in ubiquitin) cross-link involves residue Lys-435. Residues 461-467 (PSTKKRE) carry the Nuclear localization signal motif. Phosphoserine is present on residues Ser-509 and Ser-518. Glycyl lysine isopeptide (Lys-Gly) (interchain with G-Cter in SUMO2) cross-links involve residues Lys-529, Lys-571, and Lys-582. A phosphoserine mark is found at Ser-615 and Ser-673. Residues Lys-686, Lys-690, and Lys-735 each participate in a glycyl lysine isopeptide (Lys-Gly) (interchain with G-Cter in ubiquitin) cross-link. The FxF/Y motif signature appears at 740–749 (ADDLFRYNPY).

This sequence belongs to the Nibrin family. Component of the MRN complex composed of two heterodimers RAD50 and MRE11 associated with a single NBN. The MRN complexes dimerize on DNA to form joined MRN-MRN oligomers required for DNA double-strand break repair. As part of the MRN complex, interacts with MCM9; the interaction recruits the complex to DNA repair sites. Component of the BASC complex, at least composed of BRCA1, MSH2, MSH6, MLH1, ATM, BLM, RAD50, MRE11 and NBN. Interacts with histone H2AX; this requires phosphorylation of H2AX on 'Ser-139' and promotes NBN recruitment to DNA damage sites. Interacts with (phosphorylated) MDC1; promoting NBN recruitment to DNA damage sites. Interacts with (phosphorylated) RAD17; promoting NBN recruitment to DNA damage sites. Interacts (via FxF/Y motif) with ATM. Interacts with HJURP. Interacts with INTS3. Interacts with KPNA2. Interacts with TERF2; interaction is disrupted upon NBN phosphorylation by CDK2. Interacts with (phosphorylated) RBBP8/CtIP; the interaction links the role of the MRN complex in DNA double-strand break sensing to resection. Interacts with SP100; recruits NBN to PML bodies. Interacts with ATF2. Interacts with MTOR, MAPKAP1 isoform 2 and RICTOR; indicative for an association with the mTORC2 complex. Interacts with MRNIP. Interacts with UFL1; promoting UFL1 recruitment to double-strand breaks following DNA damage. Interacts with CYREN (via XLF motif). As to quaternary structure, (Microbial infection) Interacts with herpes simplex virus 1 protein UL12. In terms of processing, phosphorylated by ATM in response of ionizing radiation, and such phosphorylation is responsible intra-S phase checkpoint control and telomere maintenance. Phosphorylated at Ser-432 by CDK2 in S/G2 phases abolishes interaction with TERF2, enabling DCLRE1B/Apollo recruitment to telomeres. Phosphorylation at Ser-432 in response to dysfunctional telomeres promotes non-homologous end joining repair at telomeres, while dephosphorylation by PPP1CA promotes microhomology-mediated end-joining (MMEJ) repair. Post-translationally, ubiquitinated at Lys-435 via 'Lys-6'-linked ubiquitin chains by RNF8, promoting NBN recruitment to DNA double-strand breaks (DSBs). Ubiquitinated at Lys-686 and Lys-689 via 'Lys-63'-linked ubiquitin chains by PELI1: ubiquitination takes place following PELI1 phosphorylation and promotes ATM activation and DNA repair. Ubiquitinated at Lys-735 via 'Lys-63'-linked ubiquitin chains by the SCF(SKP2) complex: ubiquitination takes place following SKP2 phosphorylation and promotes ATM activation and DNA repair. Lactylation at Lys-388 by KAT5 in response to DNA damage promotes recruitment of the MRN complex to DNA damage sites. Delactylated by HDAC3. In terms of tissue distribution, ubiquitous. Expressed at high levels in testis.

The protein resides in the nucleus. It is found in the chromosome. Its subcellular location is the PML body. The protein localises to the telomere. Component of the MRN complex, which plays a central role in double-strand break (DSB) repair, DNA recombination, maintenance of telomere integrity and meiosis. The MRN complex is involved in the repair of DNA double-strand breaks (DSBs) via homologous recombination (HR), an error-free mechanism which primarily occurs during S and G2 phases. The complex (1) mediates the end resection of damaged DNA, which generates proper single-stranded DNA, a key initial steps in HR, and is (2) required for the recruitment of other repair factors and efficient activation of ATM and ATR upon DNA damage. The MRN complex possesses single-strand endonuclease activity and double-strand-specific 3'-5' exonuclease activity, which are provided by MRE11, to initiate end resection, which is required for single-strand invasion and recombination. Within the MRN complex, NBN acts as a protein-protein adapter, which specifically recognizes and binds phosphorylated proteins, promoting their recruitment to DNA damage sites. Recruits MRE11 and RAD50 components of the MRN complex to DSBs in response to DNA damage. Promotes the recruitment of PI3/PI4-kinase family members ATM, ATR, and probably DNA-PKcs to the DNA damage sites, activating their functions. Mediates the recruitment of phosphorylated RBBP8/CtIP to DSBs, leading to cooperation between the MRN complex and RBBP8/CtIP to initiate end resection. RBBP8/CtIP specifically promotes the endonuclease activity of the MRN complex to clear DNA ends containing protein adducts. The MRN complex is also required for the processing of R-loops. NBN also functions in telomere length maintenance via its interaction with TERF2: interaction with TERF2 during G1 phase preventing recruitment of DCLRE1B/Apollo to telomeres. NBN also promotes DNA repair choice at dysfunctional telomeres: NBN phosphorylation by CDK2 promotes non-homologous end joining repair at telomeres, while unphosphorylated NBN promotes microhomology-mediated end-joining (MMEJ) repair. Enhances AKT1 phosphorylation possibly by association with the mTORC2 complex. The polypeptide is Nibrin (Homo sapiens (Human)).